The following is a 256-amino-acid chain: Small ribosomal subunit protein eS1A (256 aa).

Alanine 2 is modified (N-acetylalanine; partial).

This sequence belongs to the eukaryotic ribosomal protein eS1 family. In terms of assembly, component of the small ribosomal subunit. Mature ribosomes consist of a small (40S) and a large (60S) subunit. The 40S subunit contains about 33 different proteins and 1 molecule of RNA (18S). The 60S subunit contains about 49 different proteins and 3 molecules of RNA (25S, 5.8S and 5S).

Its subcellular location is the cytoplasm. The polypeptide is Small ribosomal subunit protein eS1A (Debaryomyces hansenii (strain ATCC 36239 / CBS 767 / BCRC 21394 / JCM 1990 / NBRC 0083 / IGC 2968) (Yeast)).